A 398-amino-acid chain; its full sequence is Tryptophan synthase beta chain (398 aa).

At K87 the chain carries N6-(pyridoxal phosphate)lysine.

It belongs to the TrpB family. Tetramer of two alpha and two beta chains. Pyridoxal 5'-phosphate serves as cofactor.

It carries out the reaction (1S,2R)-1-C-(indol-3-yl)glycerol 3-phosphate + L-serine = D-glyceraldehyde 3-phosphate + L-tryptophan + H2O. It functions in the pathway amino-acid biosynthesis; L-tryptophan biosynthesis; L-tryptophan from chorismate: step 5/5. In terms of biological role, the beta subunit is responsible for the synthesis of L-tryptophan from indole and L-serine. This chain is Tryptophan synthase beta chain, found in Blochmanniella floridana.